Consider the following 609-residue polypeptide: Glutamine--fructose-6-phosphate aminotransferase [isomerizing] (609 aa).

C2 (nucleophile; for GATase activity) is an active-site residue. One can recognise a Glutamine amidotransferase type-2 domain in the interval 2–218 (CGIVGAIAQR…EGDIAEITRR (217 aa)). 2 consecutive SIS domains span residues 286–426 (ADEL…LKGL) and 458–599 (LAED…VDQP). K604 acts as the For Fru-6P isomerization activity in catalysis.

Homodimer.

It localises to the cytoplasm. The catalysed reaction is D-fructose 6-phosphate + L-glutamine = D-glucosamine 6-phosphate + L-glutamate. Its function is as follows. Catalyzes the first step in hexosamine metabolism, converting fructose-6P into glucosamine-6P using glutamine as a nitrogen source. The polypeptide is Glutamine--fructose-6-phosphate aminotransferase [isomerizing] (Escherichia coli O6:H1 (strain CFT073 / ATCC 700928 / UPEC)).